The primary structure comprises 131 residues: Guanyl-specific ribonuclease F1 (131 aa).

Residues 1–25 form the signal peptide; it reads MLFFKSIASLAALVSLAVASPIESR. Gln26 carries the pyrrolidone carboxylic acid modification. 2 disulfide bridges follow: Cys31/Cys127 and Cys49/Cys108. Residue His65 is part of the active site. The Proton acceptor role is filled by Glu83. Catalysis depends on His116, which acts as the Proton donor.

This sequence belongs to the ribonuclease N1/T1 family.

The catalysed reaction is [RNA] containing guanosine + H2O = an [RNA fragment]-3'-guanosine-3'-phosphate + a 5'-hydroxy-ribonucleotide-3'-[RNA fragment].. This chain is Guanyl-specific ribonuclease F1, found in Fusarium fujikuroi (Bakanae and foot rot disease fungus).